The sequence spans 766 residues: MNPSDLPGQIPLSRSDMNVQDQLDPVQRFDTHFMLPQEENFLNRPSITSESAHPRGSDLEQETELKRLALEHEHYSLESLAEKLRMDHVSANSEKFRQVFGICWLKRACEEQQDAAVQRNQIYAHYVEICNSLHIKPLNSASFGKLVRLLFPSIKTRRLGMRGHSKYHYCGIKLRGQDSFRRLRTFSDSSLSPVSCSSFPKPIPNHFENDVSSIQNTNQRVESSPASVNAAAIVRKSAVTPSSDPYNSPPPSIPLLGSQTNLQLAPSFAAPQAHPLPSHLSQSNVPPQLSHSSVPSPAPPRSVSQPTYFSQPMPQFSSSFVPGTSSIVPTLHPASAQEDFNLQHSLFFKLKLKFLPPHKLPWIPSLDVSSFSLPPIDYYLNGPYDNVEAKSALMNIYSSHCITLIESVRYMHLKQFLSEISNFPNSLSPSLLALLSSPYFTKWIERSDTVMYREILKLLFPMTLQVVPPPVLVLLRHLAENLVNHISSIYASHSSCLLQVKSETAAIFSNLLSRLLRVNDTAHAAARFLANPADRHLICNDWERFVSTRFIVHRELMCNDKEAVAALDEWYSILSTCSNPSELLDPLKDKHEASDTSMNRVELRQIDGVLDRMADFFLELPSRFPSCSPRMFLLCLGALQTSVLREITVSGGEAFGALWVIRCWVDEYMTWVAEIGGYLDDSYDELEQHHANFHNKAGISQSNIPPHLQEHRQSQQHFQQDIEALQSQQQQQATKNSLMEAAYQNAQKQKEDDYISIVFDTNGACS.

A DNA-binding region (RFX-type winged-helix) is located at residues G101–G176. 3 positions are modified to phosphoserine: S223, S224, and S227. 2 disordered regions span residues P271–Y308 and L708–Q731. Residues H279–L289 are compositionally biased toward polar residues. 2 stretches are compositionally biased toward low complexity: residues S290–Y308 and Q715–Q731.

It belongs to the RFX family.

Its subcellular location is the nucleus. In terms of biological role, positively regulates cyclic AMP-dependent protein kinase-mediated exit from the mitotic cell cycle. This is Protein sak1 (sak1) from Schizosaccharomyces pombe (strain 972 / ATCC 24843) (Fission yeast).